The following is a 205-amino-acid chain: GTP-binding protein yptV5 (205 aa).

A GTP-binding site is contributed by 15 to 22 (GDSGVGKT). The short motif at 37–45 (YKATIGADF) is the Effector region element. GTP-binding positions include 63–67 (DTAGQ) and 125–128 (NKID). 2 S-geranylgeranyl cysteine lipidation sites follow: C204 and C205.

Belongs to the small GTPase superfamily. Rab family.

It is found in the cell membrane. Functionally, protein transport. Probably involved in vesicular traffic. The chain is GTP-binding protein yptV5 (YPTV5) from Volvox carteri (Green alga).